The chain runs to 320 residues: Thiamine thiazole synthase (320 aa).

Substrate-binding positions include Cys82, 103–104, Gly111, and Val176; that span reads EA. At Cys209 the chain carries 2,3-didehydroalanine (Cys). Substrate is bound by residues Asp211, His226, Met278, and 288–290; that span reads RMG.

The protein belongs to the THI4 family. In terms of assembly, homooctamer. Fe cation is required as a cofactor. In terms of processing, during the catalytic reaction, a sulfide is transferred from Cys-209 to a reaction intermediate, generating a dehydroalanine residue.

Its subcellular location is the cytoplasm. It is found in the nucleus. The enzyme catalyses [ADP-thiazole synthase]-L-cysteine + glycine + NAD(+) = [ADP-thiazole synthase]-dehydroalanine + ADP-5-ethyl-4-methylthiazole-2-carboxylate + nicotinamide + 3 H2O + 2 H(+). Functionally, involved in biosynthesis of the thiamine precursor thiazole. Catalyzes the conversion of NAD and glycine to adenosine diphosphate 5-(2-hydroxyethyl)-4-methylthiazole-2-carboxylic acid (ADT), an adenylated thiazole intermediate. The reaction includes an iron-dependent sulfide transfer from a conserved cysteine residue of the protein to a thiazole intermediate. The enzyme can only undergo a single turnover, which suggests it is a suicide enzyme. May have additional roles in adaptation to various stress conditions and in DNA damage tolerance. The polypeptide is Thiamine thiazole synthase (sti35) (Fusarium oxysporum f. sp. lycopersici (strain 4287 / CBS 123668 / FGSC 9935 / NRRL 34936) (Fusarium vascular wilt of tomato)).